Here is a 221-residue protein sequence, read N- to C-terminus: Small ribosomal subunit protein uS2 (221 aa).

Belongs to the universal ribosomal protein uS2 family.

The sequence is that of Small ribosomal subunit protein uS2 from Methanococcus maripaludis (strain C6 / ATCC BAA-1332).